Consider the following 232-residue polypeptide: Izumo sperm-egg fusion protein 4 (232 aa).

The first 15 residues, 1-15 (MALLLCLVCLTAALA), serve as a signal peptide directing secretion. 2 N-linked (GlcNAc...) asparagine glycosylation sites follow: N24 and N219.

The protein belongs to the Izumo family. In terms of tissue distribution, detected in sperm.

It localises to the secreted. This is Izumo sperm-egg fusion protein 4 (IZUMO4) from Homo sapiens (Human).